Reading from the N-terminus, the 643-residue chain is Enzymatic polyprotein (643 aa).

The region spanning 6-209 (NPNATFITVK…KEVNVPNNIP (204 aa)) is the Peptidase A3A domain. Residue Asp-26 is the For protease activity of the active site. Residues 226-410 (VRKGIIEESK…QTIDFLGLTL (185 aa)) enclose the Reverse transcriptase domain. 3 residues coordinate Mg(2+): Asp-296, Asp-360, and Asp-361.

The protein belongs to the caulimoviridae enzymatic polyprotein family.

The enzyme catalyses DNA(n) + a 2'-deoxyribonucleoside 5'-triphosphate = DNA(n+1) + diphosphate. Its function is as follows. Encodes for at least two polypeptides: protease (PR) and reverse transcriptase (RT). The protease processes the polyprotein in cis. Reverse transcriptase is multifunctional enzyme that converts the viral RNA genome into dsDNA in viral cytoplasmic capsids. This enzyme displays a DNA polymerase activity that can copy either DNA or RNA templates, and a ribonuclease H (RNase H) activity that cleaves the RNA strand of RNA-DNA heteroduplexes in a partially processive 3'- to 5'-endonucleasic mode. Neo-synthesized pregenomic RNA (pgRNA) are encapsidated, and reverse-transcribed inside the nucleocapsid. Partial (+)DNA is synthesized from the (-)DNA template and generates the relaxed circular DNA (RC-DNA) genome. After budding and infection, the RC-DNA migrates in the nucleus, and is converted into a plasmid-like covalently closed circular DNA (cccDNA). The polypeptide is Enzymatic polyprotein (Cestrum parqui (CmYLCV)).